Consider the following 267-residue polypeptide: Tryptophan synthase alpha chain (267 aa).

Active-site proton acceptor residues include glutamate 49 and aspartate 60.

The protein belongs to the TrpA family. Tetramer of two alpha and two beta chains.

The enzyme catalyses (1S,2R)-1-C-(indol-3-yl)glycerol 3-phosphate + L-serine = D-glyceraldehyde 3-phosphate + L-tryptophan + H2O. It functions in the pathway amino-acid biosynthesis; L-tryptophan biosynthesis; L-tryptophan from chorismate: step 5/5. The alpha subunit is responsible for the aldol cleavage of indoleglycerol phosphate to indole and glyceraldehyde 3-phosphate. The sequence is that of Tryptophan synthase alpha chain from Chloroflexus aggregans (strain MD-66 / DSM 9485).